A 205-amino-acid chain; its full sequence is Protease (205 aa).

Catalysis depends on residues H54, D71, and C122.

It belongs to the peptidase C5 family. In terms of assembly, interacts with protease cofactor pVI-C; this interaction is necessary for protease activation.

Its subcellular location is the virion. It localises to the host nucleus. The enzyme catalyses Cleaves proteins of the adenovirus and its host cell at two consensus sites: -Yaa-Xaa-Gly-Gly-|-Xaa- and -Yaa-Xaa-Gly-Xaa-|-Gly- (in which Yaa is Met, Ile or Leu, and Xaa is any amino acid).. Its activity is regulated as follows. Requires DNA and protease cofactor for maximal activation. Inside nascent virions, becomes partially activated by binding to the viral DNA, allowing it to cleave the cofactor that binds to the protease and fully activates it. Actin, like the viral protease cofactor, seems to act as a cofactor in the cleavage of cytokeratin 18 and of actin itself. Functionally, cleaves viral precursor proteins (pTP, pIIIa, pVI, pVII, pVIII, and pX) inside newly assembled particles giving rise to mature virions. Protease complexed to its cofactor slides along the viral DNA to specifically locate and cleave the viral precursors. Mature virions have a weakened organization compared to the unmature virions, thereby facilitating subsequent uncoating. Without maturation, the particle lacks infectivity and is unable to uncoat. Late in adenovirus infection, in the cytoplasm, may participate in the cytoskeleton destruction. Cleaves host cell cytoskeletal keratins K7 and K18. This is Protease from Homo sapiens (Human).